The primary structure comprises 264 residues: Thymidylate synthase (264 aa).

Arg-21 is a binding site for dUMP. His-51 provides a ligand contact to (6R)-5,10-methylene-5,6,7,8-tetrahydrofolate. 126-127 (RR) is a binding site for dUMP. Cys-146 (nucleophile) is an active-site residue. DUMP-binding positions include 166-169 (RSCD), Asn-177, and 207-209 (HLY). Position 169 (Asp-169) interacts with (6R)-5,10-methylene-5,6,7,8-tetrahydrofolate. Ala-263 is a (6R)-5,10-methylene-5,6,7,8-tetrahydrofolate binding site.

Belongs to the thymidylate synthase family. Bacterial-type ThyA subfamily. In terms of assembly, homodimer.

It localises to the cytoplasm. The catalysed reaction is dUMP + (6R)-5,10-methylene-5,6,7,8-tetrahydrofolate = 7,8-dihydrofolate + dTMP. Its pathway is pyrimidine metabolism; dTTP biosynthesis. Catalyzes the reductive methylation of 2'-deoxyuridine-5'-monophosphate (dUMP) to 2'-deoxythymidine-5'-monophosphate (dTMP) while utilizing 5,10-methylenetetrahydrofolate (mTHF) as the methyl donor and reductant in the reaction, yielding dihydrofolate (DHF) as a by-product. This enzymatic reaction provides an intracellular de novo source of dTMP, an essential precursor for DNA biosynthesis. In Shigella dysenteriae serotype 1 (strain Sd197), this protein is Thymidylate synthase.